The following is a 191-amino-acid chain: dCTP deaminase, dUMP-forming (191 aa).

Residues K101–R106, D119, T127–E129, Q148, Y162, and Q174 contribute to the dCTP site. Residue E129 is the Proton donor/acceptor of the active site. The tract at residues G163–I191 is disordered. Residues Y171–I191 show a composition bias toward polar residues.

Belongs to the dCTP deaminase family. As to quaternary structure, homotrimer.

It carries out the reaction dCTP + 2 H2O = dUMP + NH4(+) + diphosphate. It participates in pyrimidine metabolism; dUMP biosynthesis; dUMP from dCTP: step 1/1. Functionally, bifunctional enzyme that catalyzes both the deamination of dCTP to dUTP and the hydrolysis of dUTP to dUMP without releasing the toxic dUTP intermediate. The sequence is that of dCTP deaminase, dUMP-forming from Acidothermus cellulolyticus (strain ATCC 43068 / DSM 8971 / 11B).